The chain runs to 135 residues: uncharacterized protein (135 aa).

Belongs to the transcriptional regulatory CopG/NikR family.

This is an uncharacterized protein from Methanocaldococcus jannaschii (strain ATCC 43067 / DSM 2661 / JAL-1 / JCM 10045 / NBRC 100440) (Methanococcus jannaschii).